The primary structure comprises 84 residues: MKVVLLECLVWMMAMMELVSCECWSQADCSDGHCCAGSSFSKNCQPYGGDGEQCEPRNKYEVYSTGCPCEENLMCSVINRCQSA.

The signal sequence occupies residues M1–C21. 5 cysteine pairs are disulfide-bonded: C23/C35, C29/C44, C34/C67, C54/C75, and C69/C81.

This sequence belongs to the AVIT (prokineticin) family. As to expression, expressed by the venom gland.

It is found in the secreted. The chain is U8-theraphotoxin-Hhn1a from Cyriopagopus hainanus (Chinese bird spider).